A 356-amino-acid polypeptide reads, in one-letter code: Putative mitogen-activated protein kinase 14C (356 aa).

The 286-residue stretch at 20–305 (YEFVRFLGGG…AAEAMLHPYL (286 aa)) folds into the Protein kinase domain. ATP-binding positions include 26 to 34 (LGGGSFGQV) and Lys49. Residue Asp147 is the Proton acceptor of the active site. At Thr177 the chain carries Phosphothreonine.

It belongs to the protein kinase superfamily. CMGC Ser/Thr protein kinase family. MAP kinase subfamily. Requires Mg(2+) as cofactor. The phosphorylation on Thr-177 activates the enzyme. A conserved Tyr, which must also be phosphorylated to activate the enzyme in closely related sequences, is replaced by His-179 in this sequence.

The catalysed reaction is L-seryl-[protein] + ATP = O-phospho-L-seryl-[protein] + ADP + H(+). It carries out the reaction L-threonyl-[protein] + ATP = O-phospho-L-threonyl-[protein] + ADP + H(+). Functionally, kinase involved in a signal transduction pathway. The chain is Putative mitogen-activated protein kinase 14C (p38c) from Drosophila melanogaster (Fruit fly).